We begin with the raw amino-acid sequence, 42 residues long: Potassium channel toxin gamma-KTx 1.3 (42 aa).

4 disulfides stabilise this stretch: Cys5-Cys23, Cys11-Cys34, Cys20-Cys39, and Cys24-Cys41.

This sequence belongs to the ergtoxin family. Gamma-KTx 1 subfamily. Expressed by the venom gland.

It localises to the secreted. Functionally, blocks Kv11/ERG potassium channels. The sequence is that of Potassium channel toxin gamma-KTx 1.3 from Centruroides gracilis (Slenderbrown scorpion).